The chain runs to 370 residues: DNA polymerase IV (370 aa).

Residues 14–198 (IIHIDMDAFF…LPIEKFYGVG (185 aa)) enclose the UmuC domain. Asp-18 and Asp-116 together coordinate Mg(2+). Glu-117 is a catalytic residue.

The protein belongs to the DNA polymerase type-Y family. In terms of assembly, monomer. Mg(2+) serves as cofactor.

The protein resides in the cytoplasm. It carries out the reaction DNA(n) + a 2'-deoxyribonucleoside 5'-triphosphate = DNA(n+1) + diphosphate. Its function is as follows. Poorly processive, error-prone DNA polymerase involved in untargeted mutagenesis. Copies undamaged DNA at stalled replication forks, which arise in vivo from mismatched or misaligned primer ends. These misaligned primers can be extended by PolIV. Exhibits no 3'-5' exonuclease (proofreading) activity. May be involved in translesional synthesis, in conjunction with the beta clamp from PolIII. The chain is DNA polymerase IV from Streptococcus mutans serotype c (strain ATCC 700610 / UA159).